Reading from the N-terminus, the 134-residue chain is Large ribosomal subunit protein bL17 (134 aa).

It belongs to the bacterial ribosomal protein bL17 family. Part of the 50S ribosomal subunit. Contacts protein L32.

This is Large ribosomal subunit protein bL17 from Paracidovorax citrulli (strain AAC00-1) (Acidovorax citrulli).